Here is a 296-residue protein sequence, read N- to C-terminus: MTQTSQYDFWVKLASRASVATALTLITIKLLAWLYSGSASMLASLTDSFADTLASIINFIAIRYAIVPADHDHRYGHGKAEPLAALAQSAFIMGSAFLLLFYGGERLLNPSPVENATLGVVVSVVAIVLTLALVLLQKRALAATNSTVVEADSLHYKSDLFLNAAVLLALVLSQYGWWWADGLFAVLIACYIGQQAFDLGYRSIQALLDRELDEDTRQRIKLIAKEDPRVLGLHDLRTRQAGKTVFIQFHLELDGNLSLNEAHSITDTTGLRVKAAFEDAEVIIHQDPVQVEPTTQ.

Residues 1–18 (MTQTSQYDFWVKLASRAS) lie on the Cytoplasmic side of the membrane. A helical membrane pass occupies residues 19–32 (VATALTLITIKLLA). At 33 to 43 (WLYSGSASMLA) the chain is on the periplasmic side. The chain crosses the membrane as a helical span at residues 44–60 (SLTDSFADTLASIINFI). The Zn(2+) site is built by Asp-47, Asp-51, Asp-70, His-73, and His-77. Residues 61–83 (AIRYAIVPADHDHRYGHGKAEPL) are Cytoplasmic-facing. Residues 84–105 (AALAQSAFIMGSAFLLLFYGGE) form a helical membrane-spanning segment. Residues 106 to 119 (RLLNPSPVENATLG) lie on the Periplasmic side of the membrane. The helical transmembrane segment at 120–138 (VVVSVVAIVLTLALVLLQK) threads the bilayer. Over 139–145 (RALAATN) the chain is Cytoplasmic. A helical transmembrane segment spans residues 146-160 (STVVEADSLHYKSDL). Zn(2+) contacts are provided by His-155 and Asp-159. The Periplasmic portion of the chain corresponds to 161–180 (FLNAAVLLALVLSQYGWWWA). Residues 181–200 (DGLFAVLIACYIGQQAFDLG) form a helical membrane-spanning segment. The Cytoplasmic portion of the chain corresponds to 201-296 (YRSIQALLDR…DPVQVEPTTQ (96 aa)). Residues His-234, Asp-235, His-250, His-263, His-285, and Asp-287 each contribute to the Zn(2+) site.

Belongs to the cation diffusion facilitator (CDF) transporter (TC 2.A.4) family. FieF subfamily. In terms of assembly, homodimer. The subunits are held together in a parallel orientation through zinc binding at the interface of the cytoplasmic domains.

Its subcellular location is the cell inner membrane. The enzyme catalyses Zn(2+)(in) + H(+)(out) = Zn(2+)(out) + H(+)(in). The catalysed reaction is Cd(2+)(in) + H(+)(out) = Cd(2+)(out) + H(+)(in). It catalyses the reaction Fe(2+)(in) + H(+)(out) = Fe(2+)(out) + H(+)(in). With respect to regulation, cytoplasmic zinc binding may trigger movements of two electrically repulsive cytoplasmic domains and reorient transmembrane helices, thereby modulating coordination geometry of the active site for zinc transport. It may modulate activity in response to cytoplasmic metal fluctuations. Functionally, divalent metal cation transporter which exports Zn(2+), Cd(2+) and possibly Fe(2+). Zn(2+)/H(+) antiporter capable of using the proton motive force to remove Zn(2+) from the cytoplasm. May be involved in zinc and iron detoxification by efflux. The sequence is that of Cation-efflux pump FieF from Shewanella oneidensis (strain ATCC 700550 / JCM 31522 / CIP 106686 / LMG 19005 / NCIMB 14063 / MR-1).